We begin with the raw amino-acid sequence, 646 residues long: Choline transporter-like protein 1 (646 aa).

Topologically, residues 1 to 27 (MGCCGCGSEEGSVRQWKPLEQRSCTDV) are cytoplasmic. A helical transmembrane segment spans residues 28 to 48 (LWLLIFVLFCIGMAIICGFAI). Residues 49–207 (ASGAAQRLVF…RVITGVMTSK (159 aa)) are Extracellular-facing. Asn133 carries N-linked (GlcNAc...) asparagine glycosylation. A helical membrane pass occupies residues 208-228 (EIIVGLCLMSLVLSILLMVII). Residues 229–233 (RYISK) are Cytoplasmic-facing. The helical transmembrane segment at 234–254 (VLVWILAILTIIGSIGGTAVL) threads the bilayer. Topologically, residues 255-281 (WWLYADHKKTLKLDPSQGDVAADNVTA) are extracellular. Residue Asn278 is glycosylated (N-linked (GlcNAc...) asparagine). Residues 282-302 (LLVCAIIATVITVILLLLMLI) traverse the membrane as a helical segment. The Cytoplasmic segment spans residues 303 to 308 (MRKRVA). The chain crosses the membrane as a helical span at residues 309–329 (LTIALFHVAGKVFIHIPFLIF). Residues 330-331 (QS) are Extracellular-facing. A helical transmembrane segment spans residues 332-352 (LWTFLALAFFWIYWIAVLLLL). At 353 to 373 (ATAGYPQKKDQGYVEFKVSGP) the chain is on the cytoplasmic side. Residues 374–394 (LQYTWIYHLVGLIWISEFILA) form a helical membrane-spanning segment. The Extracellular segment spans residues 395 to 435 (CQQMTIAGAVVTYYFTRDKHNLPATPILASMCRLIKYHLGT). Residues 436–456 (VAKGSFIITLIKIPQMILVYI) traverse the membrane as a helical segment. Residues 457 to 530 (HSQLKGKENA…RVAAINTVGD (74 aa)) lie on the Cytoplasmic side of the membrane. A helical membrane pass occupies residues 531 to 551 (FVLFLGKLLIVLVTGFVGIIL). Residues 552 to 559 (LNYQRDYT) lie on the Extracellular side of the membrane. Residues 560–580 (VWVLPLIIICLFAFFVSHCFL) traverse the membrane as a helical segment. Residues 581-646 (SIYEMVVDVL…KSMASGSDNA (66 aa)) are Cytoplasmic-facing.

It belongs to the CTL (choline transporter-like) family. In terms of tissue distribution, present in myelinated structures from brain and spinal cord (at protein level).

Its subcellular location is the cell membrane. The protein localises to the mitochondrion outer membrane. The catalysed reaction is choline(out) + n H(+)(in) = choline(in) + n H(+)(out). It carries out the reaction ethanolamine(out) + n H(+)(in) = ethanolamine(in) + n H(+)(out). In terms of biological role, probable choline transporter. May be involved in membrane synthesis and myelin production. In Torpedo marmorata (Marbled electric ray), this protein is Choline transporter-like protein 1 (slc44a1).